We begin with the raw amino-acid sequence, 313 residues long: MEKRKIILDCDSGHDDAIAIMMAAKHPAIDLLGITIVAGNQTLDKTLINGLNVCQKLEINVPVYAGMPQPIMRQQIVADNIHGETGLDGPVFEPLTRQAESTHAVKYIIDTLMASDGDITLVPVGPLSNIAVAMRMQPAILPKIREIVLMGGAYGTGNFTPSAEFNIFADPEAARVVFTSGVPLVMMGLDLTNQTVCTPDVIARMERAGGPAGELFSDIMNFTLKTQFENYGLAGGPVHDATCIGYLINPDGIKTQEMYVEVDVNSGPCYGRTVCDELGVLGKPANTKVGITIDTDWFWGLVEECVRGYIKTH.

The Proton acceptor role is filled by Asp11. Positions 11, 16, and 124 each coordinate Ca(2+). Substrate-binding residues include Gln227 and His239. Residue Asp240 coordinates Ca(2+).

The protein belongs to the IUNH family. RihB subfamily. Homotetramer. The cofactor is Ca(2+).

The enzyme catalyses a pyrimidine ribonucleoside + H2O = a pyrimidine nucleobase + D-ribose. Its function is as follows. Hydrolyzes cytidine or uridine to ribose and cytosine or uracil, respectively. Has a clear preference for cytidine over uridine. Strictly specific for ribonucleosides. The sequence is that of Pyrimidine-specific ribonucleoside hydrolase RihB from Escherichia coli (strain SE11).